The following is a 439-amino-acid chain: GTPase Der (439 aa).

EngA-type G domains are found at residues 4–169 (AMVA…PEND) and 177–352 (IKIA…EEYN). GTP-binding positions include 10-17 (GRPNVGKS), 57-61 (DTGGL), 120-123 (NKVD), 183-190 (GRPNVGKS), 230-234 (DTAGI), and 295-298 (NKWD). In terms of domain architecture, KH-like spans 353-437 (KRITTGLLNN…PIVISTKKRG (85 aa)).

Belongs to the TRAFAC class TrmE-Era-EngA-EngB-Septin-like GTPase superfamily. EngA (Der) GTPase family. Associates with the 50S ribosomal subunit.

Its function is as follows. GTPase that plays an essential role in the late steps of ribosome biogenesis. The polypeptide is GTPase Der (Caldanaerobacter subterraneus subsp. tengcongensis (strain DSM 15242 / JCM 11007 / NBRC 100824 / MB4) (Thermoanaerobacter tengcongensis)).